The primary structure comprises 181 residues: Methanesulfonate monooxygenase hydroxylase subunit beta (181 aa).

This sequence belongs to the bacterial ring-hydroxylating dioxygenase beta subunit family. In terms of assembly, the MSA monooxygenase system consists of 4 proteins: the 2 subunits of the hydroxylase component (MsmA and MsmB), a ferredoxin (MsmC) and a ferredoxin reductase (MsmD). The hydroxylase component consists of a 3 alpha (MsmA) and 3 beta (MsmB) subunits.

Its subcellular location is the cytoplasm. It carries out the reaction methanesulfonate + NADH + O2 = sulfite + formaldehyde + NAD(+) + H2O. With respect to regulation, MSAMO is inhibited by metal chelators (such as bathophenanthroline, bathocuprione, neocuprione, alpha-alpha-dipyridil and sodium EDTA) and by sodium azide, sodium arsenate and potassium cyanide. Functionally, methanesulfonate monooxygenase (MSAMO) mediates the primary degradation of methanesulfonic acid (MSA) to produce formaldehyd and inorganic sulfite by initial hydroxylation of the carbon atom prior to spontaneous cleavage of the unstable hydroxymethanesulfonic acid. MSAMO has a restricted substrate range that includes only the short-chain aliphatic sulfonates (methane- to butanesulfonate) and excludes all larger molecules, such as arylsulfonates and aromatic sulfonates. All MSAMO components are required for enzyme activity. This chain is Methanesulfonate monooxygenase hydroxylase subunit beta, found in Methylosulfonomonas methylovora.